Reading from the N-terminus, the 224-residue chain is ATP-dependent dethiobiotin synthetase BioD (224 aa).

Residue 12–17 participates in ATP binding; it reads GVGKTF. Thr16 is a binding site for Mg(2+). The active site involves Lys37. A substrate-binding site is contributed by Thr41. Glu107 contributes to the Mg(2+) binding site. ATP is bound by residues 107–110, 167–168, 197–199, and Glu204; these read EGAG, GS, and PEG.

This sequence belongs to the dethiobiotin synthetase family. In terms of assembly, homodimer. The cofactor is Mg(2+).

The protein resides in the cytoplasm. The catalysed reaction is (7R,8S)-7,8-diammoniononanoate + CO2 + ATP = (4R,5S)-dethiobiotin + ADP + phosphate + 3 H(+). It participates in cofactor biosynthesis; biotin biosynthesis; biotin from 7,8-diaminononanoate: step 1/2. Functionally, catalyzes a mechanistically unusual reaction, the ATP-dependent insertion of CO2 between the N7 and N8 nitrogen atoms of 7,8-diaminopelargonic acid (DAPA, also called 7,8-diammoniononanoate) to form a ureido ring. This chain is ATP-dependent dethiobiotin synthetase BioD, found in Corynebacterium glutamicum (strain R).